The sequence spans 275 residues: NH(3)-dependent NAD(+) synthetase (275 aa).

50–57 (GISGGVDS) serves as a coordination point for ATP. Residue Asp-56 coordinates Mg(2+). Position 147 (Arg-147) interacts with deamido-NAD(+). Thr-167 contacts ATP. Glu-172 contributes to the Mg(2+) binding site. Deamido-NAD(+)-binding residues include Lys-180 and Asp-187. Lys-196 and Thr-218 together coordinate ATP. 267 to 268 (HK) is a binding site for deamido-NAD(+).

Belongs to the NAD synthetase family. Homodimer.

It carries out the reaction deamido-NAD(+) + NH4(+) + ATP = AMP + diphosphate + NAD(+) + H(+). It participates in cofactor biosynthesis; NAD(+) biosynthesis; NAD(+) from deamido-NAD(+) (ammonia route): step 1/1. Catalyzes the ATP-dependent amidation of deamido-NAD to form NAD. Uses ammonia as a nitrogen source. The protein is NH(3)-dependent NAD(+) synthetase of Pseudomonas entomophila (strain L48).